A 406-amino-acid polypeptide reads, in one-letter code: 3-oxoacyl-[acyl-carrier-protein] synthase 1 (406 aa).

A Ketosynthase family 3 (KS3) domain is found at 1–405 (MRRVVITGIG…GTNVSLIVKK (405 aa)). Residues cysteine 164, histidine 299, and histidine 335 each act as for beta-ketoacyl synthase activity in the active site.

Belongs to the thiolase-like superfamily. Beta-ketoacyl-ACP synthases family. Homodimer.

The protein localises to the cytoplasm. It catalyses the reaction a fatty acyl-[ACP] + malonyl-[ACP] + H(+) = a 3-oxoacyl-[ACP] + holo-[ACP] + CO2. The enzyme catalyses (3Z)-decenoyl-[ACP] + malonyl-[ACP] + H(+) = 3-oxo-(5Z)-dodecenoyl-[ACP] + holo-[ACP] + CO2. It functions in the pathway lipid metabolism; fatty acid biosynthesis. Its function is as follows. Involved in the type II fatty acid elongation cycle. Catalyzes the elongation of a wide range of acyl-ACP by the addition of two carbons from malonyl-ACP to an acyl acceptor. Can also use unsaturated fatty acids. Catalyzes a key reaction in unsaturated fatty acid (UFA) synthesis, the elongation of the cis-3-decenoyl-ACP produced by FabA. The polypeptide is 3-oxoacyl-[acyl-carrier-protein] synthase 1 (fabB) (Buchnera aphidicola subsp. Acyrthosiphon pisum (strain APS) (Acyrthosiphon pisum symbiotic bacterium)).